The chain runs to 134 residues: Arginine decarboxylase proenzyme (134 aa).

The active-site Schiff-base intermediate with substrate; via pyruvic acid is serine 82. The residue at position 82 (serine 82) is a Pyruvic acid (Ser); by autocatalysis. Catalysis depends on histidine 87, which acts as the Proton acceptor; for processing activity. Catalysis depends on cysteine 102, which acts as the Proton donor; for catalytic activity.

Belongs to the prokaryotic AdoMetDC family. Type 1 subfamily. Heterooctamer of four alpha and four beta chains arranged as a tetramer of alpha/beta heterodimers. It depends on pyruvate as a cofactor. Post-translationally, is synthesized initially as an inactive proenzyme. Formation of the active enzyme involves a self-maturation process in which the active site pyruvoyl group is generated from an internal serine residue via an autocatalytic post-translational modification. Two non-identical subunits are generated from the proenzyme in this reaction, and the pyruvate is formed at the N-terminus of the alpha chain, which is derived from the carboxyl end of the proenzyme. The post-translation cleavage follows an unusual pathway, termed non-hydrolytic serinolysis, in which the side chain hydroxyl group of the serine supplies its oxygen atom to form the C-terminus of the beta chain, while the remainder of the serine residue undergoes an oxidative deamination to produce ammonia and the pyruvoyl group blocking the N-terminus of the alpha chain.

The enzyme catalyses L-arginine + H(+) = agmatine + CO2. Its pathway is amine and polyamine biosynthesis; agmatine biosynthesis; agmatine from L-arginine: step 1/1. Its function is as follows. Specifically catalyzes the decarboxylation of L-arginine to agmatine. Has no S-adenosylmethionine decarboxylase (AdoMetDC) activity. The sequence is that of Arginine decarboxylase proenzyme from Saccharolobus islandicus (strain M.16.4 / Kamchatka #3) (Sulfolobus islandicus).